The chain runs to 172 residues: Ribosome maturation factor RimM (172 aa).

In terms of domain architecture, PRC barrel spans aspartate 96–leucine 168.

This sequence belongs to the RimM family. In terms of assembly, binds ribosomal protein uS19.

It is found in the cytoplasm. An accessory protein needed during the final step in the assembly of 30S ribosomal subunit, possibly for assembly of the head region. Essential for efficient processing of 16S rRNA. May be needed both before and after RbfA during the maturation of 16S rRNA. It has affinity for free ribosomal 30S subunits but not for 70S ribosomes. This Streptococcus mutans serotype c (strain ATCC 700610 / UA159) protein is Ribosome maturation factor RimM.